The chain runs to 354 residues: MTALKNDRFLRALLKQPVDVTPVWMMRQAGRYLPEYRASRAKAGDFMSLCMNPQFACEVTLQPLDRYPLDAAILFSDILTIPDAMGQGLYFETGEGPRFKKVISTLADIEALPIPDPQKDLGYVMDAVSTIRRELNGRVPLIGFSGSPWTLATYMVEGGSSKDFRKTKAMAYDNPQALHLLLDKLAQSVTSYLNGQILAGAQAVQIFDTWGGNLSAAAYQEFSLAYMRKIVSGLIREHEGRKVPVILFTKNGGLWLESIAEAGADALGLDWTCEIGDARRRVGDKVALQGNMDPTVLYAKPEAIRKEVARILASYGKGSGHVFNLGHGITPEVDPEHAGVFINAVHELSAQYHQ.

Substrate is bound by residues 27–31 (RQAGR), Asp-77, Tyr-154, Thr-209, and His-327.

The protein belongs to the uroporphyrinogen decarboxylase family. In terms of assembly, homodimer.

Its subcellular location is the cytoplasm. It catalyses the reaction uroporphyrinogen III + 4 H(+) = coproporphyrinogen III + 4 CO2. It functions in the pathway porphyrin-containing compound metabolism; protoporphyrin-IX biosynthesis; coproporphyrinogen-III from 5-aminolevulinate: step 4/4. Functionally, catalyzes the decarboxylation of four acetate groups of uroporphyrinogen-III to yield coproporphyrinogen-III. The protein is Uroporphyrinogen decarboxylase of Pseudomonas entomophila (strain L48).